A 975-amino-acid chain; its full sequence is Protein bicaudal D homolog 1 (975 aa).

Coiled coils occupy residues 1–265 (MAAE…HISI) and 319–496 (SELN…IANE). Disordered regions lie at residues 383-403 (SSKE…GEEA), 545-616 (RSGS…LDTS), 800-824 (DHEQ…VSGE), 836-877 (LLHS…ASYL), and 922-975 (DCQQ…PPHP). Composition is skewed to basic and acidic residues over residues 385 to 403 (KELK…GEEA) and 581 to 590 (VAKESTEASK). The span at 592-602 (PSPTKTPTISP) shows a compositional bias: polar residues. Residues 663–803 (IDKDKEALME…LEDLEFDHEQ (141 aa)) adopt a coiled-coil conformation. The interaction with RAB6A stretch occupies residues 663 to 803 (IDKDKEALME…LEDLEFDHEQ (141 aa)). Positions 840–877 (QGPQTPNIRVSSGTQRKRQFSPSLCDQSRPRTSGASYL) are enriched in polar residues.

It belongs to the BicD family. As to quaternary structure, interacts with RAB6A. Interacts (via C-terminus) with RAB6B (GTP-bound); the interaction is direct. Interacts with CLIP-115 and KIFC2. In terms of assembly, (Microbial infection) Interacts with human cytomegalovirus/HHV-5 protein UL32. In terms of tissue distribution, expressed in the brain, heart and skeletal muscle.

The protein resides in the golgi apparatus. Functionally, regulates coat complex coatomer protein I (COPI)-independent Golgi-endoplasmic reticulum transport by recruiting the dynein-dynactin motor complex. In Homo sapiens (Human), this protein is Protein bicaudal D homolog 1 (BICD1).